Reading from the N-terminus, the 152-residue chain is Deoxyuridine 5'-triphosphate nucleotidohydrolase (152 aa).

Residues 71-73 (RSG), Asn-84, 88-90 (LID), and Met-98 contribute to the substrate site.

This sequence belongs to the dUTPase family. The cofactor is Mg(2+).

The enzyme catalyses dUTP + H2O = dUMP + diphosphate + H(+). It participates in pyrimidine metabolism; dUMP biosynthesis; dUMP from dCTP (dUTP route): step 2/2. This enzyme is involved in nucleotide metabolism: it produces dUMP, the immediate precursor of thymidine nucleotides and it decreases the intracellular concentration of dUTP so that uracil cannot be incorporated into DNA. This Enterobacter sp. (strain 638) protein is Deoxyuridine 5'-triphosphate nucleotidohydrolase.